The chain runs to 234 residues: Adenosine 5'-phosphosulfate reductase (234 aa).

Residues Cys120, Cys121, Cys203, and Cys206 each contribute to the [4Fe-4S] cluster site. Cys229 (nucleophile; cysteine thiosulfonate intermediate) is an active-site residue.

Belongs to the PAPS reductase family. CysH subfamily. It depends on [4Fe-4S] cluster as a cofactor.

It localises to the cytoplasm. The enzyme catalyses [thioredoxin]-disulfide + sulfite + AMP + 2 H(+) = adenosine 5'-phosphosulfate + [thioredoxin]-dithiol. The protein operates within sulfur metabolism; hydrogen sulfide biosynthesis; sulfite from sulfate. Catalyzes the formation of sulfite from adenosine 5'-phosphosulfate (APS) using thioredoxin as an electron donor. The chain is Adenosine 5'-phosphosulfate reductase from Bacillus mycoides (strain KBAB4) (Bacillus weihenstephanensis).